A 281-amino-acid chain; its full sequence is MLSPAGKISLQSFTGSSLVFFVICMFNHYYGITNLVVNTLIVFFYAVNVYFFLKFFYNEFAFAIAIRAAFLGLVLVLGLYIKLVAPPNIQIFGGYMSVMALFHYSEFLAIAIVQPKQVSTDSFVINHSPQYTIAAVSSWVEFFIETYFFPGLKEIHWLSNIGLCVCILGEVLRKTAILTAGSNFNHLVQCEKSSDHVLVTHGVYAWFRHPSYVGWFYWSIGTQIILINPLCIPAYTLASWMFFKERIYIEESMLLSFFGQQYCDYQQQVGTGIPFIEGYKI.

Residues 1 to 2 (ML) are Cytoplasmic-facing. A helical membrane pass occupies residues 3–29 (SPAGKISLQSFTGSSLVFFVICMFNHY). Topologically, residues 30–35 (YGITNL) are lumenal. Residues 36–53 (VVNTLIVFFYAVNVYFFL) traverse the membrane as a helical segment. At 54 to 58 (KFFYN) the chain is on the cytoplasmic side. A helical membrane pass occupies residues 59 to 85 (EFAFAIAIRAAFLGLVLVLGLYIKLVA). Topologically, residues 86 to 88 (PPN) are lumenal. A helical membrane pass occupies residues 89–113 (IQIFGGYMSVMALFHYSEFLAIAIV). The Cytoplasmic segment spans residues 114–118 (QPKQV). A helical membrane pass occupies residues 119-149 (STDSFVINHSPQYTIAAVSSWVEFFIETYFF). Residues 150 to 155 (PGLKEI) lie on the Lumenal side of the membrane. The chain crosses the membrane as a helical span at residues 156–181 (HWLSNIGLCVCILGEVLRKTAILTAG). Residues 182 to 208 (SNFNHLVQCEKSSDHVLVTHGVYAWFR) lie on the Cytoplasmic side of the membrane. S-adenosyl-L-methionine contacts are provided by residues Q189, 196–199 (HVLV), Y204, and 209–212 (HPSY). Residues 209–226 (HPSYVGWFYWSIGTQIIL) form a helical membrane-spanning segment. At 227–229 (INP) the chain is on the lumenal side. The chain crosses the membrane as a helical span at residues 230–243 (LCIPAYTLASWMFF). Residues 244 to 281 (KERIYIEESMLLSFFGQQYCDYQQQVGTGIPFIEGYKI) are Cytoplasmic-facing. A substrate-binding site is contributed by R246. E250 provides a ligand contact to S-adenosyl-L-methionine.

Belongs to the class VI-like SAM-binding methyltransferase superfamily. Isoprenylcysteine carboxyl methyltransferase family.

It localises to the endoplasmic reticulum membrane. The enzyme catalyses [protein]-C-terminal S-[(2E,6E)-farnesyl]-L-cysteine + S-adenosyl-L-methionine = [protein]-C-terminal S-[(2E,6E)-farnesyl]-L-cysteine methyl ester + S-adenosyl-L-homocysteine. In terms of biological role, catalyzes the post-translational methylation of isoprenylated C-terminal cysteine residues. The protein is Protein-S-isoprenylcysteine O-methyltransferase of Tribolium castaneum (Red flour beetle).